We begin with the raw amino-acid sequence, 370 residues long: Apolipoprotein A-V (370 aa).

Residues 1–21 form the signal peptide; it reads MASMIALLTWALALLPALASA. The residue at position 59 (serine 59) is a Phosphoserine.

The protein belongs to the apolipoprotein A1/A4/E family. In terms of assembly, interacts with GPIHBP1. Interacts with SORL1; this interaction leads to APOA5 internalization and sorting either to lysosomes and degradation, or to the trans-Golgi network.

It localises to the secreted. Its subcellular location is the early endosome. The protein localises to the late endosome. It is found in the golgi apparatus. The protein resides in the trans-Golgi network. Functionally, minor apolipoprotein mainly associated with HDL and to a lesser extent with VLDL. May also be associated with chylomicrons. Important determinant of plasma triglyceride (TG) levels by both being a potent stimulator of apo-CII lipoprotein lipase (LPL) TG hydrolysis and an inhibitor of the hepatic VLDL-TG production rate (without affecting the VLDL-apoB production rate). Activates poorly lecithin:cholesterol acyltransferase (LCAT) and does not enhance efflux of cholesterol from macrophages. Binds heparin. This is Apolipoprotein A-V (APOA5) from Acinonyx jubatus (Cheetah).